The primary structure comprises 87 residues: Large ribosomal subunit protein bL27 (87 aa).

The disordered stretch occupies residues 1-21 (MAHKKAGGSSRNGRDSESKRL).

This sequence belongs to the bacterial ribosomal protein bL27 family.

This Paraburkholderia phytofirmans (strain DSM 17436 / LMG 22146 / PsJN) (Burkholderia phytofirmans) protein is Large ribosomal subunit protein bL27.